Consider the following 517-residue polypeptide: Cytochrome P450 52A8 (517 aa).

Residue Cys-464 coordinates heme.

The protein belongs to the cytochrome P450 family. It depends on heme as a cofactor.

Together with an NADPH cytochrome P450 the enzyme system catalyzes the terminal hydroxylation as the first step in the assimilation of alkanes and fatty acids. Preferentially hydroxylates lauric acid. This Candida tropicalis (Yeast) protein is Cytochrome P450 52A8 (CYP52A8).